We begin with the raw amino-acid sequence, 152 residues long: Aspartate carbamoyltransferase regulatory chain (152 aa).

Residues Cys-108, Cys-113, Cys-137, and Cys-140 each contribute to the Zn(2+) site.

This sequence belongs to the PyrI family. Contains catalytic and regulatory chains. It depends on Zn(2+) as a cofactor.

Functionally, involved in allosteric regulation of aspartate carbamoyltransferase. This is Aspartate carbamoyltransferase regulatory chain from Neisseria meningitidis serogroup A / serotype 4A (strain DSM 15465 / Z2491).